A 175-amino-acid polypeptide reads, in one-letter code: Adenylate kinase isoenzyme 6 homolog (175 aa).

ATP is bound by residues glycine 18, glycine 20, lysine 21, threonine 22, and threonine 23. Residues 38-61 (CIGDVVKENHLHFGFDEKWKTYDV) are NMPbind. The segment at 113 to 123 (SRGYSLEKIQE) is LID. Residue arginine 114 coordinates ATP.

This sequence belongs to the adenylate kinase family. AK6 subfamily. As to quaternary structure, interacts with small ribosomal subunit protein uS11. Not a structural component of 43S pre-ribosomes, but transiently interacts with them by binding to uS11.

It is found in the cytoplasm. Its subcellular location is the nucleus. The enzyme catalyses AMP + ATP = 2 ADP. It carries out the reaction ATP + H2O = ADP + phosphate + H(+). Broad-specificity nucleoside monophosphate (NMP) kinase that catalyzes the reversible transfer of the terminal phosphate group between nucleoside triphosphates and monophosphates. Also has ATPase activity. Involved in the late cytoplasmic maturation steps of the 40S ribosomal particles, specifically 18S rRNA maturation. While NMP activity is not required for ribosome maturation, ATPase activity is. Associates transiently with small ribosomal subunit protein uS11. ATP hydrolysis breaks the interaction with uS11. May temporarily remove uS11 from the ribosome to enable a conformational change of the ribosomal RNA that is needed for the final maturation step of the small ribosomal subunit. Its NMP activity may have a role in nuclear energy homeostasis. The sequence is that of Adenylate kinase isoenzyme 6 homolog (fap7) from Schizosaccharomyces pombe (strain 972 / ATCC 24843) (Fission yeast).